A 338-amino-acid polypeptide reads, in one-letter code: Dihydroorotate dehydrogenase (quinone) (338 aa).

Residues 68–72 (AGMDK) and Thr92 each bind FMN. Residue Lys72 coordinates substrate. Substrate is bound at residue 117 to 121 (NRMGF). FMN-binding residues include Ser147 and Asn180. Asn180 contacts substrate. Residue Ser183 is the Nucleophile of the active site. A substrate-binding site is contributed by Asn185. FMN contacts are provided by Lys214 and Thr242. Residue 243–244 (NT) participates in substrate binding. Residues Gly267, Gly296, and 317–318 (YT) contribute to the FMN site.

The protein belongs to the dihydroorotate dehydrogenase family. Type 2 subfamily. In terms of assembly, monomer. The cofactor is FMN.

It localises to the cell membrane. The enzyme catalyses (S)-dihydroorotate + a quinone = orotate + a quinol. The protein operates within pyrimidine metabolism; UMP biosynthesis via de novo pathway; orotate from (S)-dihydroorotate (quinone route): step 1/1. Functionally, catalyzes the conversion of dihydroorotate to orotate with quinone as electron acceptor. This Salinispora arenicola (strain CNS-205) protein is Dihydroorotate dehydrogenase (quinone).